The following is a 206-amino-acid chain: Tektin bundle-interacting protein 1 (206 aa).

As to quaternary structure, microtubule inner protein component of sperm flagellar doublet microtubules.

The protein localises to the cytoplasm. It is found in the cytoskeleton. It localises to the cilium axoneme. The protein resides in the flagellum axoneme. In terms of biological role, microtubule inner protein (MIP) part of the dynein-decorated doublet microtubules (DMTs) in cilia axoneme, which is required for motile cilia beating. Located at the center of the tektin bundle where may function to recruit tektins or stabilize the bundle. The chain is Tektin bundle-interacting protein 1 from Mus musculus (Mouse).